We begin with the raw amino-acid sequence, 125 residues long: Glycine cleavage system H protein 1 (125 aa).

Residues 22–103 enclose the Lipoyl-binding domain; the sequence is KAYIGITDYA…PYGSWLVAVR (82 aa). The residue at position 63 (lysine 63) is an N6-lipoyllysine.

Belongs to the GcvH family. The glycine cleavage system is composed of four proteins: P, T, L and H. (R)-lipoate serves as cofactor.

In terms of biological role, the glycine cleavage system catalyzes the degradation of glycine. The H protein shuttles the methylamine group of glycine from the P protein to the T protein. In Caldanaerobacter subterraneus subsp. tengcongensis (strain DSM 15242 / JCM 11007 / NBRC 100824 / MB4) (Thermoanaerobacter tengcongensis), this protein is Glycine cleavage system H protein 1.